Here is a 71-residue protein sequence, read N- to C-terminus: Small ribosomal subunit protein bS21 (71 aa).

Residues 39 to 71 (EKPTTVRKRAKAAAQKRHAKKLARENARRVRLY) are disordered. A compositionally biased stretch (basic residues) spans 43 to 59 (TVRKRAKAAAQKRHAKK). The segment covering 60–71 (LARENARRVRLY) has biased composition (basic and acidic residues).

It belongs to the bacterial ribosomal protein bS21 family.

This Vibrio atlanticus (strain LGP32) (Vibrio splendidus (strain Mel32)) protein is Small ribosomal subunit protein bS21.